The following is a 477-amino-acid chain: Bifunctional protein HldE (477 aa).

The segment at 1 to 318 (MKVTLPEFER…ENAVRGRADT (318 aa)) is ribokinase. Lys-179 carries the N6-acetyllysine modification. 195–198 (NLSE) is a binding site for ATP. Asp-264 is a catalytic residue. The tract at residues 344–477 (MTNGVFDILH…IKKIQQDKKG (134 aa)) is cytidylyltransferase.

The protein in the N-terminal section; belongs to the carbohydrate kinase PfkB family. This sequence in the C-terminal section; belongs to the cytidylyltransferase family. Homodimer.

The catalysed reaction is D-glycero-beta-D-manno-heptose 7-phosphate + ATP = D-glycero-beta-D-manno-heptose 1,7-bisphosphate + ADP + H(+). The enzyme catalyses D-glycero-beta-D-manno-heptose 1-phosphate + ATP + H(+) = ADP-D-glycero-beta-D-manno-heptose + diphosphate. Its pathway is nucleotide-sugar biosynthesis; ADP-L-glycero-beta-D-manno-heptose biosynthesis; ADP-L-glycero-beta-D-manno-heptose from D-glycero-beta-D-manno-heptose 7-phosphate: step 1/4. It participates in nucleotide-sugar biosynthesis; ADP-L-glycero-beta-D-manno-heptose biosynthesis; ADP-L-glycero-beta-D-manno-heptose from D-glycero-beta-D-manno-heptose 7-phosphate: step 3/4. Functionally, catalyzes the phosphorylation of D-glycero-D-manno-heptose 7-phosphate at the C-1 position to selectively form D-glycero-beta-D-manno-heptose-1,7-bisphosphate. Catalyzes the ADP transfer from ATP to D-glycero-beta-D-manno-heptose 1-phosphate, yielding ADP-D-glycero-beta-D-manno-heptose. This Escherichia fergusonii (strain ATCC 35469 / DSM 13698 / CCUG 18766 / IAM 14443 / JCM 21226 / LMG 7866 / NBRC 102419 / NCTC 12128 / CDC 0568-73) protein is Bifunctional protein HldE.